The chain runs to 1186 residues: Partner and localizer of BRCA2 (1186 aa).

Residues 1–160 are required for its oligomerization and is important for its focal concentration at DNA damage sites; that stretch reads MDEPPGKPLS…QKRTFISQER (160 aa). The tract at residues 1–200 is interaction with RAD51; the sequence is MDEPPGKPLS…PVTEIRTHLL (200 aa). The segment at 1–319 is interaction with BRCA1; sequence MDEPPGKPLS…SKSGQLPTSS (319 aa). The interval 1–579 is DNA-binding (with the preference D loop &gt; dsDNA &gt; ssDNA); sequence MDEPPGKPLS…EDSLSWSNSA (579 aa). Residues 9–41 are a coiled coil; that stretch reads LSCEEKEKLKEKLAFLKREYSKTLARLQRAQRA. Disordered regions lie at residues 52–72 and 95–157; these read VEEQ…HSEP and KTSI…TFIS. Basic and acidic residues predominate over residues 120–141; sequence RTDDTQEHFPHRVSDPSGEQKQ. The segment covering 143–152 has biased composition (basic residues); sequence LPSRRKKQQK. 2 positions are modified to phosphoserine: S172 and S190. The disordered stretch occupies residues 252 to 273; that stretch reads TLSDSGSSQHLEHIPPKGSSEL. At S285 the chain carries Phosphoserine. Residues 346–365 form a disordered region; sequence KEQNQTEKSLKSPSDTLDGR. A phosphoserine mark is found at S376 and S387. The chAM (Chromatin-association motif); required for chromatin association, mediates nucleosome association stretch occupies residues 395–446; sequence SCTVPEGLLFPAEYYVRTTRSMSNCQRKVAVEAVIQSHLDVKKKGFKNKNKD. The interval 440 to 525 is disordered; that stretch reads FKNKNKDASK…RKSACTPASD (86 aa). S454 is modified (phosphoserine). A compositionally biased stretch (polar residues) spans 467-488; it reads GTCTGQPSSRTSQKLLSLTKVS. Position 660 is a phosphoserine (S660). 2 disordered regions span residues 679-698 and 774-798; these read PGKS…KTGL and KQFD…QGQP. Over residues 687 to 698 the composition is skewed to polar residues; it reads PNSQSQHTKTGL. Residues 775 to 1186 are required for interaction with POLH and POLH DNA synthesis stimulation; it reads QFDSSGSPAK…DGNIFVYHYS (412 aa). S781 carries the post-translational modification Phosphoserine. The interval 853–1186 is interaction with RAD51, BRCA2 and POLH; the sequence is GNLQLVSELK…DGNIFVYHYS (334 aa). WD repeat units lie at residues 854 to 915, 917 to 961, 962 to 1009, 1010 to 1052, 1058 to 1109, 1115 to 1153, and 1155 to 1186; these read NLQL…WHFA, VPVL…QVLL, KSGN…LMPP, EETI…MHID, SVCH…MLYC, AGRF…LLPP, and SDQH…YHYS.

In terms of assembly, homooligomer; dissociated upon DNA damage thus allowing association with BRCA1. Oligomerization is essential for its focal accumulation at DNA breaks. Part of a BRCA complex containing BRCA1, BRCA2 and PALB2. Interacts with BRCA1 and this interaction is essential for its function in HRR. Interacts with RAD51AP1 and MORF4L1/MRG15. Component of the homologous recombination repair (HR) complex composed of ERCC5/XPG, BRCA2, PALB2, DSS1 and RAD51. Within the complex, interacts with ERCC5/XPG and BRCA2. Interacts with BRCA2, RAD51C, RAD51 and XRCC3; the interactions are direct and it may serve as a scaffold for a HR complex containing PALB2, BRCA2, RAD51C, RAD51 and XRCC3. Interacts with POLH; the interaction is direct.

The protein resides in the nucleus. Its function is as follows. Plays a critical role in homologous recombination repair (HRR) through its ability to recruit BRCA2 and RAD51 to DNA breaks. Strongly stimulates the DNA strand-invasion activity of RAD51, stabilizes the nucleoprotein filament against a disruptive BRC3-BRC4 polypeptide and helps RAD51 to overcome the suppressive effect of replication protein A (RPA). Functionally cooperates with RAD51AP1 in promoting of D-loop formation by RAD51. Serves as the molecular scaffold in the formation of the BRCA1-PALB2-BRCA2 complex which is essential for homologous recombination. Via its WD repeats is proposed to scaffold a HR complex containing RAD51C and BRCA2 which is thought to play a role in HR-mediated DNA repair. Essential partner of BRCA2 that promotes the localization and stability of BRCA2. Also enables its recombinational repair and checkpoint functions of BRCA2. May act by promoting stable association of BRCA2 with nuclear structures, allowing BRCA2 to escape the effects of proteasome-mediated degradation. Binds DNA with high affinity for D loop, which comprises single-stranded, double-stranded and branched DNA structures. May play a role in the extension step after strand invasion at replication-dependent DNA double-strand breaks; together with BRCA2 is involved in both POLH localization at collapsed replication forks and DNA polymerization activity. In Homo sapiens (Human), this protein is Partner and localizer of BRCA2 (PALB2).